Reading from the N-terminus, the 443-residue chain is Trimethylamine monooxygenase (443 aa).

D37, Q39, L45, and W46 together coordinate FAD. Positions 70 and 72 each coordinate NADP(+). Positions 72 and 125 each coordinate FAD. Residues Y170, S202, S203, S205, and R226 each contribute to the NADP(+) site. 2 residues coordinate FAD: Q315 and T318. R409 is a binding site for NADP(+).

This sequence belongs to the FMO family. Requires FAD as cofactor.

It carries out the reaction trimethylamine + NADPH + O2 = trimethylamine N-oxide + NADP(+) + H2O. In terms of biological role, catalyzes the oxidation of trimethylamine (TMA) to produce trimethylamine N-oxide (TMAO). In vitro, has a broad substrate specificity, oxidizing many nitrogen- and sulfur-containing compounds, including dimethylamine (DMA), dimethylsulfide (DMS) and dimethylsulfoxide (DMSO). This Pelagibacter ubique (strain HTCC1002) protein is Trimethylamine monooxygenase.